A 192-amino-acid polypeptide reads, in one-letter code: UPF0149 protein YgfB (192 aa).

Belongs to the UPF0149 family.

In Salmonella typhi, this protein is UPF0149 protein YgfB.